A 109-amino-acid polypeptide reads, in one-letter code: Large ribosomal subunit protein uL24 (109 aa).

Belongs to the universal ribosomal protein uL24 family. In terms of assembly, part of the 50S ribosomal subunit.

Functionally, one of two assembly initiator proteins, it binds directly to the 5'-end of the 23S rRNA, where it nucleates assembly of the 50S subunit. One of the proteins that surrounds the polypeptide exit tunnel on the outside of the subunit. The protein is Large ribosomal subunit protein uL24 of Rickettsia massiliae (strain Mtu5).